Reading from the N-terminus, the 191-residue chain is GDP-mannose pyrophosphatase (191 aa).

Residues Y17, 38–40, R67, and 85–87 contribute to the GDP-alpha-D-mannose site; these read KRE and AGL. One can recognise a Nudix hydrolase domain in the interval 43–180; it reads DRGNGATILL…EIRDGKTVLL (138 aa). Positions 85, 100, and 104 each coordinate Mg(2+). The Nudix box signature appears at 86-106; the sequence is GLLDNDEPEVCIRKEAIEETG. GDP-alpha-D-mannose-binding positions include E104, E127, 150-151, and K176; that span reads DE. A Mg(2+)-binding site is contributed by E151.

The protein belongs to the Nudix hydrolase family. NudK subfamily. As to quaternary structure, homodimer. It depends on Mg(2+) as a cofactor.

It catalyses the reaction GDP-alpha-D-mannose + H2O = alpha-D-mannose 1-phosphate + GMP + 2 H(+). In terms of biological role, nucleoside diphosphate sugar hydrolase that hydrolyzes GDP-mannose as its preferred substrate, yielding GMP and mannose-1-phosphate. The polypeptide is GDP-mannose pyrophosphatase (nudK) (Escherichia coli (strain UTI89 / UPEC)).